We begin with the raw amino-acid sequence, 200 residues long: Lipopolysaccharide core heptose(II)-phosphate phosphatase (200 aa).

A signal peptide spans 1–25 (MLAFCRSSLKSKKYFIILLALAAIA).

It belongs to the phosphoglycerate mutase family. Ais subfamily.

It localises to the periplasm. The protein operates within bacterial outer membrane biogenesis; lipopolysaccharide metabolism. Catalyzes the dephosphorylation of heptose(II) of the outer membrane lipopolysaccharide core. This is Lipopolysaccharide core heptose(II)-phosphate phosphatase from Escherichia coli (strain SE11).